The chain runs to 367 residues: Cobalt-precorrin-5B C(1)-methyltransferase (367 aa).

The protein belongs to the CbiD family.

The catalysed reaction is Co-precorrin-5B + S-adenosyl-L-methionine = Co-precorrin-6A + S-adenosyl-L-homocysteine. It participates in cofactor biosynthesis; adenosylcobalamin biosynthesis; cob(II)yrinate a,c-diamide from sirohydrochlorin (anaerobic route): step 6/10. Its function is as follows. Catalyzes the methylation of C-1 in cobalt-precorrin-5B to form cobalt-precorrin-6A. The polypeptide is Cobalt-precorrin-5B C(1)-methyltransferase (Leptospira interrogans serogroup Icterohaemorrhagiae serovar Lai (strain 56601)).